Here is an 890-residue protein sequence, read N- to C-terminus: Exo-beta-D-glucosaminidase (890 aa).

The N-terminal stretch at 1 to 18 is a signal peptide; sequence MIAKAVAALLLGSGLASA. Residues 19-26 constitute a propeptide that is removed on maturation; it reads AGTPLTSK. N-linked (GlcNAc...) asparagine glycans are attached at residues N194, N334, and N438. D462 functions as the Proton donor in the catalytic mechanism. The active-site Nucleophile is the E537. N-linked (GlcNAc...) asparagine glycosylation is found at N576 and N687.

The protein belongs to the glycosyl hydrolase 2 family. Monomer.

It is found in the secreted. The protein localises to the extracellular space. The catalysed reaction is Hydrolysis of chitosan or chitosan oligosaccharides to remove successive D-glucosamine residues from the non-reducing termini.. Its function is as follows. Hydrolyzes chitosan and chitooligosaccharides with retention of anomeric configuration. Has no activity against beta-D-galactoside, beta-D-glucuronide, beta-D-mannoside, chitin, glycol chitosan, cellulose, N,N'-diacetylchitibiose and pNP-GlcNAc. The chain is Exo-beta-D-glucosaminidase from Hypocrea virens (Gliocladium virens).